The chain runs to 492 residues: Proline--tRNA ligase (492 aa).

The protein belongs to the class-II aminoacyl-tRNA synthetase family. ProS type 3 subfamily. As to quaternary structure, homodimer.

It localises to the cytoplasm. It catalyses the reaction tRNA(Pro) + L-proline + ATP = L-prolyl-tRNA(Pro) + AMP + diphosphate. Its function is as follows. Catalyzes the attachment of proline to tRNA(Pro) in a two-step reaction: proline is first activated by ATP to form Pro-AMP and then transferred to the acceptor end of tRNA(Pro). The protein is Proline--tRNA ligase of Christiangramia forsetii (strain DSM 17595 / CGMCC 1.15422 / KT0803) (Gramella forsetii).